The sequence spans 211 residues: DNA-directed RNA polymerases I, II, and III subunit RPABC1 (211 aa).

Belongs to the archaeal Rpo5/eukaryotic RPB5 RNA polymerase subunit family. In terms of assembly, component of the RNA polymerase I (Pol I), RNA polymerase II (Pol II) and RNA polymerase III (Pol III) complexes consisting of at least 13, 12 and 17 subunits, respectively. In RNA Pol II, this subunit is present in 2-fold molar excess over the other subunits.

It localises to the nucleus. Its function is as follows. DNA-dependent RNA polymerase catalyzes the transcription of DNA into RNA using the four ribonucleoside triphosphates as substrates. Common component of RNA polymerases I, II and III which synthesize ribosomal RNA precursors, mRNA precursors and many functional non-coding RNAs, and small RNAs, such as 5S rRNA and tRNAs, respectively. Pol II is the central component of the basal RNA polymerase II transcription machinery. Pols are composed of mobile elements that move relative to each other. In Pol II, RPB5 is part of the lower jaw surrounding the central large cleft and thought to grab the incoming DNA template. Seems to be the major component in this process. This is DNA-directed RNA polymerases I, II, and III subunit RPABC1 from Caenorhabditis briggsae.